A 334-amino-acid chain; its full sequence is Large ribosomal subunit protein uL3 (334 aa).

The segment covering 1 to 10 (MGMKKNRPRR) has biased composition (basic residues). The interval 1 to 21 (MGMKKNRPRRGSLAFSPRKRA) is disordered.

This sequence belongs to the universal ribosomal protein uL3 family. As to quaternary structure, part of the 50S ribosomal subunit. Forms a cluster with proteins L14 and L24e.

In terms of biological role, one of the primary rRNA binding proteins, it binds directly near the 3'-end of the 23S rRNA, where it nucleates assembly of the 50S subunit. The sequence is that of Large ribosomal subunit protein uL3 from Methanococcus maripaludis (strain C5 / ATCC BAA-1333).